The primary structure comprises 307 residues: MDSRGFDSEGREFSSATEMWAHEIGAAADAPVSAAVAEPAPAPAAGSNGVAGEQEAGGGGKREEWYSKAIAYWQGVEASTEGVLGGYGCVNDVDVKGSDAFLRPLLAERFGAARRHLVALDCGSGIGRVTKNFLLRHFNEVDLVEPVSHFLEAAQENLTECMEVGEDTHKAANFYCVPLQDFTPDEGRYDVIWIQWCIGQLPDDDFISFFNRAKIGLKPNGFFVLKENIARNGFVLDKEDNSITRSDAYFKELFKKCGLYIHSIKDQSDLPKELFAVKMYALVTEKPKIQKNGKRRRPKNSPRMIRS.

The span at 38-54 (EPAPAPAAGSNGVAGEQ) shows a compositional bias: low complexity. The segment at 38 to 60 (EPAPAPAAGSNGVAGEQEAGGGG) is disordered. S-adenosyl-L-methionine-binding positions include Gly-123, Arg-128, 145-147 (EPV), 179-180 (LQ), and Gln-195.

It belongs to the methyltransferase superfamily. NTM1 family.

It catalyses the reaction N-terminal L-alanyl-L-prolyl-L-lysyl-[protein] + 3 S-adenosyl-L-methionine = N-terminal N,N,N-trimethyl-L-alanyl-L-prolyl-L-lysyl-[protein] + 3 S-adenosyl-L-homocysteine + 3 H(+). The enzyme catalyses N-terminal L-seryl-L-prolyl-L-lysyl-[protein] + 3 S-adenosyl-L-methionine = N-terminal N,N,N-trimethyl-L-seryl-L-prolyl-L-lysyl-[protein] + 3 S-adenosyl-L-homocysteine + 3 H(+). The catalysed reaction is N-terminal L-prolyl-L-prolyl-L-lysyl-[protein] + 2 S-adenosyl-L-methionine = N-terminal N,N-dimethyl-L-prolyl-L-prolyl-L-lysyl-[protein] + 2 S-adenosyl-L-homocysteine + 2 H(+). Alpha-N-methyltransferase that methylates the N-terminus of target proteins containing the N-terminal motif [Ala/Pro/Ser]-Pro-Lys when the initiator Met is cleaved. Specifically catalyzes mono-, di- or tri-methylation of exposed alpha-amino group of Ala or Ser residue in the [Ala/Ser]-Pro-Lys motif and mono- or di-methylation of Pro in the Pro-Pro-Lys motif. The protein is Alpha N-terminal protein methyltransferase 1 of Oryza sativa subsp. indica (Rice).